The following is a 329-amino-acid chain: Vomeronasal type-1 receptor 43 (329 aa).

At 1 to 32 (MSKILFFSPCSLFSHTMNKNSRLHTNSNIGNT) the chain is on the extracellular side. A helical membrane pass occupies residues 33–53 (FFSEIGIGITGNSFLLLYHIL). Residues 54-65 (KFIRGHRPRLTD) are Cytoplasmic-facing. A helical membrane pass occupies residues 66–86 (LPIGLLSLIHLLMLLVAAFIA). Residues 87 to 109 (TDIFISRRGWDDIICKFLVYLYR) are Extracellular-facing. Cysteine 101 and cysteine 188 are disulfide-bonded. A helical transmembrane segment spans residues 110–130 (VLRGLSLCTTSMLSVLQAIIL). The Cytoplasmic portion of the chain corresponds to 131-147 (SPRSSCLSKFKHISLHH). A helical membrane pass occupies residues 148–168 (ILCAILFLSVLYMLISSQLLV). Over 169–209 (SIIATPNLTTNDLTYVTQSCSILPLSYLVESINSTLLAIRE) the chain is Extracellular. N-linked (GlcNAc...) asparagine glycans are attached at residues asparagine 175 and asparagine 201. A helical membrane pass occupies residues 210–230 (YFLISLMFLSTWYIVALLCMH). The Cytoplasmic portion of the chain corresponds to 231–255 (RKQTQHLQETRLSLKKSPEQSATQT). The chain crosses the membrane as a helical span at residues 256–276 (ILMLMTFFVLMTIYDNIVSCL). Residues 277–285 (RTMLLNDPT) lie on the Extracellular side of the membrane. Residues 286 to 306 (SYSIELFMIHIYATVSPFVFM) form a helical membrane-spanning segment. The Cytoplasmic portion of the chain corresponds to 307 to 329 (SNEKHIVNFLRSMGKRMINLNLH).

The protein belongs to the G-protein coupled receptor 1 family.

It localises to the cell membrane. Putative pheromone receptor implicated in the regulation of social and reproductive behavior. This chain is Vomeronasal type-1 receptor 43 (Vmn1r43), found in Mus musculus (Mouse).